The chain runs to 350 residues: S-adenosylmethionine:tRNA ribosyltransferase-isomerase (350 aa).

This sequence belongs to the QueA family. Monomer.

It is found in the cytoplasm. It carries out the reaction 7-aminomethyl-7-carbaguanosine(34) in tRNA + S-adenosyl-L-methionine = epoxyqueuosine(34) in tRNA + adenine + L-methionine + 2 H(+). It participates in tRNA modification; tRNA-queuosine biosynthesis. Its function is as follows. Transfers and isomerizes the ribose moiety from AdoMet to the 7-aminomethyl group of 7-deazaguanine (preQ1-tRNA) to give epoxyqueuosine (oQ-tRNA). This is S-adenosylmethionine:tRNA ribosyltransferase-isomerase from Bacillus cereus (strain G9842).